Consider the following 90-residue polypeptide: ATP-dependent Clp protease adapter protein ClpS (90 aa).

The protein belongs to the ClpS family. In terms of assembly, binds to the N-terminal domain of the chaperone ClpA.

Functionally, involved in the modulation of the specificity of the ClpAP-mediated ATP-dependent protein degradation. The chain is ATP-dependent Clp protease adapter protein ClpS from Helicobacter pylori (strain J99 / ATCC 700824) (Campylobacter pylori J99).